The sequence spans 1651 residues: Roundabout homolog 1 (1651 aa).

An N-terminal signal peptide occupies residues M1–A25. Topologically, residues Q26–P897 are extracellular. The tract at residues D33 to T57 is disordered. The segment covering I44 to Y56 has biased composition (polar residues). 5 Ig-like C2-type domains span residues P68 to E164, D170 to T257, P262 to T346, P351 to T446, and P455 to E541. Residues C89 and C147 are joined by a disulfide bond. N160 carries N-linked (GlcNAc...) asparagine glycosylation. 3 disulfides stabilise this stretch: C191/C240, C283/C330, and C372/C428. N-linked (GlcNAc...) asparagine glycosylation is present at N463. A disulfide bond links C476 and C525. Fibronectin type-III domains follow at residues A563–V657, A676–E773, and P778–H874. Residues N790, N820, and N827 are each glycosylated (N-linked (GlcNAc...) asparagine). A helical transmembrane segment spans residues A898–L918. Residues Y919 to S1651 lie on the Cytoplasmic side of the membrane. S940 carries the post-translational modification Phosphoserine. T948 is modified (phosphothreonine). Y1038 is modified (phosphotyrosine; by ABL; in vitro). S1055 is subject to Phosphoserine. Residues Y1073 and Y1114 each carry the phosphotyrosine; by ABL; in vitro modification. Disordered stretches follow at residues K1124–Y1202, Y1224–E1337, E1352–F1397, and R1420–S1651. Over residues P1137–T1146 the composition is skewed to polar residues. The segment covering G1147–Q1163 has biased composition (low complexity). The segment covering L1186 to H1196 has biased composition (pro residues). T1240 is subject to Phosphothreonine. The span at Y1255–E1269 shows a compositional bias: polar residues. Over residues E1281–R1293 the composition is skewed to basic and acidic residues. Over residues V1296–P1307 the composition is skewed to pro residues. Phosphoserine is present on S1297. Over residues M1322–M1336 the composition is skewed to acidic residues. The segment covering S1384–F1397 has biased composition (low complexity). Polar residues predominate over residues P1438 to S1451. Residues R1459 to H1470 show a composition bias toward basic residues. Pro residues predominate over residues L1480–I1490. Composition is skewed to basic and acidic residues over residues A1516 to V1541 and D1549 to P1573. A compositionally biased stretch (polar residues) spans F1592–P1601. Residues S1602–S1614 are compositionally biased toward low complexity. Over residues N1642–S1651 the composition is skewed to acidic residues.

Belongs to the immunoglobulin superfamily. ROBO family. As to quaternary structure, homodimer. Dimerization is mediated by the extracellular domain and is independent of SLIT liganding. Interacts with SLIT1. Interacts with SLIT2. Interacts with FLRT3. Interacts with MYO9B (via Rho-GAP domain). Ubiquitinated. May be deubiquitinated by USP33. In terms of tissue distribution, widely expressed, with exception of kidney.

Its subcellular location is the cell membrane. The protein resides in the cell projection. It is found in the axon. The protein localises to the endoplasmic reticulum-Golgi intermediate compartment membrane. Receptor for SLIT1 and SLIT2 that mediates cellular responses to molecular guidance cues in cellular migration, including axonal navigation at the ventral midline of the neural tube and projection of axons to different regions during neuronal development. Interaction with the intracellular domain of FLRT3 mediates axon attraction towards cells expressing NTN1. In axon growth cones, the silencing of the attractive effect of NTN1 by SLIT2 may require the formation of a ROBO1-DCC complex. Plays a role in the regulation of cell migration via its interaction with MYO9B; inhibits MYO9B-mediated stimulation of RHOA GTPase activity, and thereby leads to increased levels of active, GTP-bound RHOA. May be required for lung development. This is Roundabout homolog 1 (ROBO1) from Homo sapiens (Human).